The primary structure comprises 336 residues: D-alanine--D-alanine ligase (336 aa).

The ATP-grasp domain occupies 124–330; sequence KMWFSALGIP…FTEYLSLVIK (207 aa). 154–209 lines the ATP pocket; the sequence is ALENWGSIFVKAASQGSSVGCYKVDDSSKVAGVLKDAFGYAPYVIVEKTIKARELE. Asp-284, Glu-297, and Asn-299 together coordinate Mg(2+).

It belongs to the D-alanine--D-alanine ligase family. It depends on Mg(2+) as a cofactor. The cofactor is Mn(2+).

The protein resides in the cytoplasm. The enzyme catalyses 2 D-alanine + ATP = D-alanyl-D-alanine + ADP + phosphate + H(+). Its pathway is cell wall biogenesis; peptidoglycan biosynthesis. Its function is as follows. Cell wall formation. The polypeptide is D-alanine--D-alanine ligase (Shewanella sp. (strain MR-7)).